We begin with the raw amino-acid sequence, 406 residues long: MLRIVPPKEIQGEVIAPPSKSYTHRGYFLSLLADEKSIVERPLISDDTLATIDAIRAFGADLIEEVVYPPEELRPNYIFARDSGTTARISIIVSSLAKGVSVIDGREQLRRRPMEDGVSSLRMIGVEAIGKRLPVKVFGRGRISAKEVSIVAEKSSQFATGFLILAAKIGLKVEIVKPVSKPYIEMTLKTMEEFGVKYDKAQENERLVIFVDPGVKGTKFKVPGDYSSAANFLVAGALYGKIRVRNLMRDDVQADKEILNILREYGAKVKVKDEYVEVESNERNPLNVDCSNFPDLFPLLAVLAAYAEGKSVIRGRQLRIKESDRIHAMAVNLSRAGIRVRELSDGLEIWGGQPKGFRGKTFNDHRITMALAILALGAKGESIIPETKSIAKSYPNFFEDLMRVIK.

Positions 20, 21, and 25 each coordinate 3-phosphoshikimate. Position 20 (lysine 20) interacts with phosphoenolpyruvate. Residues glycine 84 and arginine 112 each contribute to the phosphoenolpyruvate site. 6 residues coordinate 3-phosphoshikimate: serine 155, serine 156, glutamine 157, aspartate 295, glutamine 317, and lysine 321. Glutamine 157 is a binding site for phosphoenolpyruvate. Catalysis depends on aspartate 295, which acts as the Proton acceptor. Positions 325, 366, and 392 each coordinate phosphoenolpyruvate.

This sequence belongs to the EPSP synthase family. As to quaternary structure, monomer.

The protein resides in the cytoplasm. The catalysed reaction is 3-phosphoshikimate + phosphoenolpyruvate = 5-O-(1-carboxyvinyl)-3-phosphoshikimate + phosphate. The protein operates within metabolic intermediate biosynthesis; chorismate biosynthesis. In terms of biological role, catalyzes the transfer of the enolpyruvyl moiety of phosphoenolpyruvate (PEP) to the 5-hydroxyl of shikimate-3-phosphate (S3P) to produce enolpyruvyl shikimate-3-phosphate and inorganic phosphate. This is 3-phosphoshikimate 1-carboxyvinyltransferase from Pyrococcus furiosus (strain ATCC 43587 / DSM 3638 / JCM 8422 / Vc1).